The primary structure comprises 188 residues: dCTP deaminase (188 aa).

DCTP-binding positions include 111 to 116 (KSTYAR), 135 to 137 (TLE), Gln156, Tyr170, and Gln180. The active-site Proton donor/acceptor is the Glu137.

It belongs to the dCTP deaminase family. Homotrimer.

It carries out the reaction dCTP + H2O + H(+) = dUTP + NH4(+). The protein operates within pyrimidine metabolism; dUMP biosynthesis; dUMP from dCTP (dUTP route): step 1/2. Functionally, catalyzes the deamination of dCTP to dUTP. The chain is dCTP deaminase from Cupriavidus taiwanensis (strain DSM 17343 / BCRC 17206 / CCUG 44338 / CIP 107171 / LMG 19424 / R1) (Ralstonia taiwanensis (strain LMG 19424)).